The primary structure comprises 315 residues: Shiga-like toxin 1 subunit A (315 aa).

The signal sequence occupies residues 1-22 (MKIIIFRVLTFFFVIFSVNVVA). The tract at residues 23 to 273 (KEFTLDFSTA…CHHHASRVAR (251 aa)) is A1. The active site involves Glu189. Cys264 and Cys283 are disulfide-bonded. The tract at residues 274 to 315 (MASDEFPSMCPADGRVRGITHNKILWDSSTLGAILMRRTISS) is A2.

Belongs to the ribosome-inactivating protein family. Shiga-like toxin contains a single subunit A and five copies of subunit B.

It localises to the secreted. The enzyme catalyses Endohydrolysis of the N-glycosidic bond at one specific adenosine on the 28S rRNA.. In terms of biological role, the A subunit is responsible for inhibiting protein synthesis through the catalytic inactivation of 60S ribosomal subunits. After endocytosis, the A subunit is cleaved by furin in two fragments, A1 and A2: A1 is the catalytically active fragment, and A2 is essential for holotoxin assembly with the B subunits. The polypeptide is Shiga-like toxin 1 subunit A (stxA) (Escherichia coli (Bacteriophage H19B)).